The primary structure comprises 471 residues: Heparan-sulfate 6-O-sulfotransferase 3 (471 aa).

Residues 1-4 (MDER) are Cytoplasmic-facing. A helical; Signal-anchor for type II membrane protein membrane pass occupies residues 5–27 (FNKWLLTPVLTLLFVVIMYQYVS). Over 28-471 (PSCTSSCTNF…EDYNSQVVRW (444 aa)) the chain is Lumenal. Residues 39-122 (EQPRAGEAGP…EAPENGSLPR (84 aa)) are disordered. Residues 41-62 (PRAGEAGPPAVPGPARRAQAPP) show a composition bias toward low complexity. Positions 70–81 (QLPPPPRGPPEG) are enriched in pro residues. Acidic residues predominate over residues 88-114 (PEEEDEEPGDPREGEEEEEEDEPDPEA). 2 N-linked (GlcNAc...) asparagine glycosylation sites follow: N117 and N128. 152–160 (HIQKTGGTT) lines the 3'-phosphoadenylyl sulfate pocket. Substrate contacts are provided by residues 182-183 (KK), R199, W204, and H209. H209 functions as the Proton acceptor in the catalytic mechanism. An N-linked (GlcNAc...) asparagine glycan is attached at N231. Positions 245 and 253 each coordinate 3'-phosphoadenylyl sulfate. Residues H257 and W264 each contribute to the substrate site. 2 N-linked (GlcNAc...) asparagine glycosylation sites follow: N324 and N329. 377-379 (TQF) provides a ligand contact to 3'-phosphoadenylyl sulfate. N380 carries an N-linked (GlcNAc...) asparagine glycan. Residue 383–384 (RA) participates in 3'-phosphoadenylyl sulfate binding. The segment at 422–471 (TKQLEHQRDRQKRREERRLQREHRDHQWPKEDGAAEGTVTEDYNSQVVRW) is disordered. The span at 423 to 454 (KQLEHQRDRQKRREERRLQREHRDHQWPKEDG) shows a compositional bias: basic and acidic residues. The segment covering 462 to 471 (EDYNSQVVRW) has biased composition (polar residues).

This sequence belongs to the sulfotransferase 6 family.

The protein resides in the membrane. It catalyses the reaction alpha-D-glucosaminyl-[heparan sulfate](n) + 3'-phosphoadenylyl sulfate = 6-sulfo-alpha-D-glucosaminyl-[heparan sulfate](n) + adenosine 3',5'-bisphosphate + H(+). Functionally, 6-O-sulfation enzyme which catalyzes the transfer of sulfate from 3'-phosphoadenosine 5'-phosphosulfate (PAPS) to position 6 of the N-sulfoglucosamine residue (GlcNS) of heparan sulfate. This Homo sapiens (Human) protein is Heparan-sulfate 6-O-sulfotransferase 3 (HS6ST3).